A 119-amino-acid polypeptide reads, in one-letter code: Dihydroneopterin aldolase (119 aa).

Residues Glu21, Tyr53, and 72-73 (IE) each bind substrate. Lys99 acts as the Proton donor/acceptor in catalysis.

Belongs to the DHNA family.

The catalysed reaction is 7,8-dihydroneopterin = 6-hydroxymethyl-7,8-dihydropterin + glycolaldehyde. The protein operates within cofactor biosynthesis; tetrahydrofolate biosynthesis; 2-amino-4-hydroxy-6-hydroxymethyl-7,8-dihydropteridine diphosphate from 7,8-dihydroneopterin triphosphate: step 3/4. Functionally, catalyzes the conversion of 7,8-dihydroneopterin to 6-hydroxymethyl-7,8-dihydropterin. This chain is Dihydroneopterin aldolase (folB), found in Streptococcus pyogenes serotype M3 (strain ATCC BAA-595 / MGAS315).